The chain runs to 210 residues: Uracil phosphoribosyltransferase (210 aa).

Residues Arg-78, Arg-103, and 130 to 138 (DPMLATGGS) contribute to the 5-phospho-alpha-D-ribose 1-diphosphate site. Uracil is bound by residues Ile-193 and 198–200 (GDA). 5-phospho-alpha-D-ribose 1-diphosphate is bound at residue Asp-199.

It belongs to the UPRTase family. Requires Mg(2+) as cofactor.

It carries out the reaction UMP + diphosphate = 5-phospho-alpha-D-ribose 1-diphosphate + uracil. Its pathway is pyrimidine metabolism; UMP biosynthesis via salvage pathway; UMP from uracil: step 1/1. With respect to regulation, allosterically activated by GTP. Functionally, catalyzes the conversion of uracil and 5-phospho-alpha-D-ribose 1-diphosphate (PRPP) to UMP and diphosphate. This Laribacter hongkongensis (strain HLHK9) protein is Uracil phosphoribosyltransferase.